The sequence spans 167 residues: Leptin (167 aa).

A signal peptide spans M1–A21. C117 and C167 are joined by a disulfide.

Belongs to the leptin family.

The protein resides in the secreted. In terms of biological role, key player in the regulation of energy balance and body weight control. Once released into the circulation, has central and peripheral effects by binding LEPR, found in many tissues, which results in the activation of several major signaling pathways. In the hypothalamus, acts as an appetite-regulating factor that induces a decrease in food intake and an increase in energy consumption by inducing anorexinogenic factors and suppressing orexigenic neuropeptides, also regulates bone mass and secretion of hypothalamo-pituitary-adrenal hormones. In the periphery, increases basal metabolism, influences reproductive function, regulates pancreatic beta-cell function and insulin secretion, is pro-angiogenic for endothelial cell and affects innate and adaptive immunity. In the arcuate nucleus of the hypothalamus, activates by depolarization POMC neurons inducing FOS and SOCS3 expression to release anorexigenic peptides and inhibits by hyperpolarization NPY neurons inducing SOCS3 with a consequent reduction on release of orexigenic peptides. In addition to its known satiety inducing effect, has a modulatory role in nutrient absorption. In the intestine, reduces glucose absorption by enterocytes by activating PKC and leading to a sequential activation of p38, PI3K and ERK signaling pathways which exerts an inhibitory effect on glucose absorption. Acts as a growth factor on certain tissues, through the activation of different signaling pathways increases expression of genes involved in cell cycle regulation such as CCND1, via JAK2-STAT3 pathway, or VEGFA, via MAPK1/3 and PI3K-AKT1 pathways. May also play an apoptotic role via JAK2-STAT3 pathway and up-regulation of BIRC5 expression. Pro-angiogenic, has mitogenic activity on vascular endothelial cells and plays a role in matrix remodeling by regulating the expression of matrix metalloproteinases (MMPs) and tissue inhibitors of metalloproteinases (TIMPs). In innate immunity, modulates the activity and function of neutrophils by increasing chemotaxis and the secretion of oxygen radicals. Increases phagocytosis by macrophages and enhances secretion of pro-inflammatory mediators. Increases cytotoxic ability of NK cells. Plays a pro-inflammatory role, in synergy with IL1B, by inducing NOS2 which promotes the production of IL6, IL8 and Prostaglandin E2, through a signaling pathway that involves JAK2, PI3K, MAP2K1/MEK1 and MAPK14/p38. In adaptive immunity, promotes the switch of memory T-cells towards T helper-1 cell immune responses. Increases CD4(+)CD25(-) T-cell proliferation and reduces autophagy during TCR (T-cell receptor) stimulation, through MTOR signaling pathway activation and BCL2 up-regulation. This chain is Leptin (Lep), found in Rattus norvegicus (Rat).